A 70-amino-acid chain; its full sequence is Metallothionein-like protein 1 (70 aa).

Belongs to the metallothionein superfamily. Type 15 family.

Functionally, metallothioneins have a high content of cysteine residues that bind various heavy metals. This is Metallothionein-like protein 1 (MT1) from Festuca rubra (Red fescue).